Reading from the N-terminus, the 158-residue chain is 6,7-dimethyl-8-ribityllumazine synthase (158 aa).

Residues phenylalanine 23, 61–63 (SFE), and 85–87 (AVI) each bind 5-amino-6-(D-ribitylamino)uracil. Position 90 to 91 (90 to 91 (ET)) interacts with (2S)-2-hydroxy-3-oxobutyl phosphate. The Proton donor role is filled by histidine 93. Phenylalanine 118 serves as a coordination point for 5-amino-6-(D-ribitylamino)uracil. Residue arginine 132 coordinates (2S)-2-hydroxy-3-oxobutyl phosphate.

Belongs to the DMRL synthase family.

It carries out the reaction (2S)-2-hydroxy-3-oxobutyl phosphate + 5-amino-6-(D-ribitylamino)uracil = 6,7-dimethyl-8-(1-D-ribityl)lumazine + phosphate + 2 H2O + H(+). It functions in the pathway cofactor biosynthesis; riboflavin biosynthesis; riboflavin from 2-hydroxy-3-oxobutyl phosphate and 5-amino-6-(D-ribitylamino)uracil: step 1/2. In terms of biological role, catalyzes the formation of 6,7-dimethyl-8-ribityllumazine by condensation of 5-amino-6-(D-ribitylamino)uracil with 3,4-dihydroxy-2-butanone 4-phosphate. This is the penultimate step in the biosynthesis of riboflavin. This is 6,7-dimethyl-8-ribityllumazine synthase from Prochlorococcus marinus (strain MIT 9301).